An 85-amino-acid chain; its full sequence is Cell division topological specificity factor (85 aa).

The protein belongs to the MinE family.

In terms of biological role, prevents the cell division inhibition by proteins MinC and MinD at internal division sites while permitting inhibition at polar sites. This ensures cell division at the proper site by restricting the formation of a division septum at the midpoint of the long axis of the cell. The sequence is that of Cell division topological specificity factor from Shewanella sp. (strain ANA-3).